The sequence spans 177 residues: 3-hydroxydecanoyl-[acyl-carrier-protein] dehydratase (177 aa).

The active site involves histidine 76.

This sequence belongs to the thioester dehydratase family. FabA subfamily. As to quaternary structure, homodimer.

It is found in the cytoplasm. It carries out the reaction a (3R)-hydroxyacyl-[ACP] = a (2E)-enoyl-[ACP] + H2O. The enzyme catalyses (3R)-hydroxydecanoyl-[ACP] = (2E)-decenoyl-[ACP] + H2O. It catalyses the reaction (2E)-decenoyl-[ACP] = (3Z)-decenoyl-[ACP]. It functions in the pathway lipid metabolism; fatty acid biosynthesis. Functionally, necessary for the introduction of cis unsaturation into fatty acids. Catalyzes the dehydration of (3R)-3-hydroxydecanoyl-ACP to E-(2)-decenoyl-ACP and then its isomerization to Z-(3)-decenoyl-ACP. Can catalyze the dehydratase reaction for beta-hydroxyacyl-ACPs with saturated chain lengths up to 16:0, being most active on intermediate chain length. The sequence is that of 3-hydroxydecanoyl-[acyl-carrier-protein] dehydratase from Haemophilus influenzae (strain PittGG).